The chain runs to 370 residues: Phenylalanine dehydrogenase (370 aa).

Arginine 44 is an NAD(+) binding site. Residue lysine 68 participates in L-phenylalanine binding. Lysine 80 (proton donor/acceptor) is an active-site residue. 114–115 contributes to the L-phenylalanine binding site; sequence TD. Residues aspartate 115, serine 146, threonine 150, 180–186, 203–204, 243–244, and 264–266 each bind NAD(+); these read GLGKVGF, DV, AI, and AAN. Asparagine 266 contributes to the L-phenylalanine binding site.

Belongs to the Glu/Leu/Phe/Val dehydrogenases family.

It catalyses the reaction L-phenylalanine + NAD(+) + H2O = 3-phenylpyruvate + NH4(+) + NADH + H(+). It functions in the pathway amino-acid biosynthesis; L-phenylalanine biosynthesis; L-phenylalanine from phenylpyruvate (PDH route): step 1/1. Functionally, catalyzes the reversible NAD(+)-dependent oxidative deamination of L-phenylalanine to phenylpyruvate. This Caldalkalibacillus thermarum (strain TA2.A1) protein is Phenylalanine dehydrogenase.